Consider the following 574-residue polypeptide: E3 ubiquitin-protein ligase NEURL1 (574 aa).

The span at 1–18 (MGNNFSSVSSLQRGNPSR) shows a compositional bias: polar residues. Residues 1–53 (MGNNFSSVSSLQRGNPSRASRGHPQNLKDSIGGSFPVPSHRCHHKQKHCPPTL) form a disordered region. The N-myristoyl glycine moiety is linked to residue Gly2. NHR domains lie at 61–217 (TPLL…QLLD) and 292–447 (GDLR…RILG). The segment at 520–560 (ECTICYEHAVDTVIYTCGHMCLCYSCGLRLKKALHACCPIC) adopts an RING-type zinc-finger fold.

Interacts with CPEB3 (via N-terminal domain); the interaction increases CPEB3 ubiquitination. Interacts with DLL1. In terms of processing, myristoylation is a determinant of membrane targeting. Expressed in CA1 pyramidal neurons (at protein level). Expressed throughout the adult forebrain, including the cerebral cortex, amygdala, striatum, and CA1 area of the hippocampus. Expressed in sensory neurons of the olfactory epithelium, the vomeronasal organ, mammary gland and skeletal muscle.

The protein localises to the cytoplasm. Its subcellular location is the perinuclear region. It is found in the cell membrane. The protein resides in the perikaryon. It localises to the cell projection. The protein localises to the dendrite. Its subcellular location is the postsynaptic density. It catalyses the reaction S-ubiquitinyl-[E2 ubiquitin-conjugating enzyme]-L-cysteine + [acceptor protein]-L-lysine = [E2 ubiquitin-conjugating enzyme]-L-cysteine + N(6)-ubiquitinyl-[acceptor protein]-L-lysine.. It participates in protein modification; protein ubiquitination. Plays a role in hippocampal-dependent synaptic plasticity, learning and memory. Involved in the formation of spines and functional synaptic contacts by modulating the translational activity of the cytoplasmic polyadenylation element-binding protein CPEB3. Promotes ubiquitination of CPEB3, and hence induces CPEB3-dependent mRNA translation activation of glutamate receptor GRIA1 and GRIA2. Can function as an E3 ubiquitin-protein ligase to activate monoubiquitination of JAG1 (in vitro), thereby regulating the Notch pathway. Acts as a tumor suppressor; inhibits malignant cell transformation of medulloblastoma (MB) cells by inhibiting the Notch signaling pathway. This is E3 ubiquitin-protein ligase NEURL1 (Neurl1) from Mus musculus (Mouse).